Here is a 159-residue protein sequence, read N- to C-terminus: Pupal cuticle protein Edg-91 (159 aa).

The first 21 residues, 1-21, serve as a signal peptide directing secretion; it reads MALVRVSCMLALLLIAGQGQA.

In terms of tissue distribution, larval (posterior) and imaginal (anterior) epidermis.

Component of the pupal cuticle. This Drosophila melanogaster (Fruit fly) protein is Pupal cuticle protein Edg-91 (Edg91).